The primary structure comprises 66 residues: MAKNKGVRIVVTLECTECRSASASEKRSPGVSRYTTEKNRRNTTERLEIMKFCPQLNKMTLHKEIK.

Belongs to the bacterial ribosomal protein bL33 family.

This is Large ribosomal subunit protein bL33 from Synechococcus sp. (strain CC9902).